Here is a 348-residue protein sequence, read N- to C-terminus: EGF-like domain-containing protein 1 (348 aa).

Positions 1–19 (MFYLSTFMTIVISLSLVSC) are cleaved as a signal peptide. The 33-residue stretch at 60–92 (TGSNCTVTCQNNGKCYDGSKCLCSSDYTGDLCE) folds into the EGF-like domain. Disulfide bonds link Cys64/Cys74, Cys68/Cys80, and Cys82/Cys91. A ZP domain is found at 99 to 342 (RCTLDAVVFE…PTCAAPXVGQ (244 aa)).

As to expression, prismatic layer of shell (at protein level). Expressed primarily in the mantle with highest level in the mantle edge and lower level in the mantle pallium.

The protein resides in the secreted. This is EGF-like domain-containing protein 1 from Pinctada maxima (Silver-lipped pearl oyster).